We begin with the raw amino-acid sequence, 207 residues long: Early nodulin-like protein 11 (207 aa).

The signal sequence occupies residues methionine 1–alanine 24. The Phytocyanin domain occupies arginine 25–serine 130. Asparagine 43 is a glycosylation site (N-linked (GlcNAc...) asparagine). A disulfide bridge links cysteine 83 with cysteine 118. The interval glutamine 129–alanine 179 is disordered. A compositionally biased stretch (pro residues) spans threonine 144–serine 164. The segment covering proline 165 to alanine 179 has biased composition (low complexity). Serine 181 carries the GPI-anchor amidated serine lipid modification. A propeptide spans serine 182–alanine 207 (removed in mature form).

It belongs to the early nodulin-like (ENODL) family. In terms of tissue distribution, confined to flowers and siliques.

It is found in the cell membrane. Functionally, may act as a carbohydrate transporter. Required, together with ENODL11, ENODL12, ENODL13, ENODL14 and ENODL15, for male-female communication and pollen tube reception and burst at the synergid cell surface of the female gametophyte. In Arabidopsis thaliana (Mouse-ear cress), this protein is Early nodulin-like protein 11.